A 312-amino-acid polypeptide reads, in one-letter code: Cytochrome c biogenesis protein CcsA (312 aa).

Helical transmembrane passes span 18 to 38, 48 to 68, 73 to 93, 102 to 122, 148 to 168, 216 to 236, 250 to 267, and 279 to 299; these read LGILIFYFLLINLPISLLALF, FFTILINLFIALQLIFRWILS, ISNLYESLYFLVWGISLGQLL, IIPVIAIPIELLTIAFACFVL, VMLSYAALIIGSLLSASVLFI, SILVGFVLLTLGLITGAIWAN, TWAFISWLFYAAYLHMRI, and FATSGFFVVLICYLGVNFLGI.

The protein belongs to the CcmF/CycK/Ccl1/NrfE/CcsA family. In terms of assembly, may interact with ccs1.

It localises to the cellular thylakoid membrane. In terms of biological role, required during biogenesis of c-type cytochromes (cytochrome c6 and cytochrome f) at the step of heme attachment. This is Cytochrome c biogenesis protein CcsA from Prochlorococcus marinus (strain MIT 9515).